Consider the following 492-residue polypeptide: Alpha/beta hydrolase ucsC (492 aa).

The Nucleophile role is filled by S258.

It belongs to the AB hydrolase superfamily. FUS2 hydrolase family. Homodimer.

The protein operates within mycotoxin biosynthesis. Its function is as follows. Alpha/beta hydrolase; part of the gene cluster that mediates the biosynthesis of UCS1025A, a member of the pyrrolizidinone family that acts as a strong telomerase inhibitor and displays potent antibacterial and antitumor properties. These compounds share a hemiaminal-containing pyrrolizidinone core fused with a gamma-lactone, giving a furopyrrolizidine that is connected to a decalin fragment. The polyketide synthase module (PKS) of the PKS-NRPS ucsA is responsible for the synthesis of the polyketide backbone via the condensation of an acetyl-CoA starter unit with 6 malonyl-CoA units. The downstream nonribosomal peptide synthetase (NRPS) module then amidates the carboxyl end of the polyketide with a 2S,3S-methylproline derived from L-isoleucine by the 2-oxoglutarate-dependent dioxygenase ucsF which converts L-isoleucine to (4S,5S)-4-methylpyrroline-5-carboxylate that is further converted to 2S,3S-methylproline by the pyrroline-5-carboxylate reductase ucsG. Reductive release of the completed aminoacyl polyketide from the assembly line can form the 3-pyrrolin-2-one structure via an intramolecular Knoevenagel reaction. Because ucsA lacks a designated enoylreductase (ER) domain, the required activity is provided the enoyl reductase ucsL. This keto acyclic precursor is the substrate of the Diels-Alderase ucsH, that catalyzes the Diels-Alder cycloaddition. Oxidation of the 3S-methyl group to a carboxylate by the cytochrome P450 monooxygenase ucsK allows an oxa-Michael cyclization that might involve the reductase/dehydrogenase ucsI and which furnishes the furopyrrolizidine. The oxidase ucsJ likely plays a critical role in stereoselective reduction of the C5-C6 double bond to afford the required R-configured carboxylate group. Further enolization and oxidation at C5 by an unidentified enzyme affords the last intermediate that can undergo oxa-Michael cyclization to yield UCS1025A. The chain is Alpha/beta hydrolase ucsC from Acremonium sp.